Reading from the N-terminus, the 209-residue chain is Ribonuclease HII (209 aa).

The RNase H type-2 domain occupies 25 to 209; it reads RRIAGIDEAG…ATFRGVREYL (185 aa). 3 residues coordinate a divalent metal cation: Asp-31, Glu-32, and Asp-123.

Belongs to the RNase HII family. Requires Mn(2+) as cofactor. The cofactor is Mg(2+).

Its subcellular location is the cytoplasm. The enzyme catalyses Endonucleolytic cleavage to 5'-phosphomonoester.. Endonuclease that specifically degrades the RNA of RNA-DNA hybrids. The chain is Ribonuclease HII from Syntrophotalea carbinolica (strain DSM 2380 / NBRC 103641 / GraBd1) (Pelobacter carbinolicus).